The chain runs to 394 residues: Elongation factor Tu (394 aa).

In terms of domain architecture, tr-type G spans 10–204 (KPHINIGTIG…AVDDNIPTPE (195 aa)). A G1 region spans residues 19–26 (GHVDHGKT). 19-26 (GHVDHGKT) provides a ligand contact to GTP. Threonine 26 provides a ligand contact to Mg(2+). Positions 60–64 (GITIN) are G2. The G3 stretch occupies residues 81–84 (DCPG). Residues 81–85 (DCPGH) and 136–139 (NKID) each bind GTP. Residues 136 to 139 (NKID) are G4. The tract at residues 174–176 (SAL) is G5.

This sequence belongs to the TRAFAC class translation factor GTPase superfamily. Classic translation factor GTPase family. EF-Tu/EF-1A subfamily. As to quaternary structure, monomer.

It is found in the cytoplasm. The catalysed reaction is GTP + H2O = GDP + phosphate + H(+). Functionally, GTP hydrolase that promotes the GTP-dependent binding of aminoacyl-tRNA to the A-site of ribosomes during protein biosynthesis. This is Elongation factor Tu from Chlamydia felis (strain Fe/C-56) (Chlamydophila felis).